Consider the following 191-residue polypeptide: Protein YceI (191 aa).

The N-terminal stretch at 1 to 22 (MKKSLLGLTFASLMFSAGSAVA) is a signal peptide.

This sequence belongs to the UPF0312 family. Type 1 subfamily.

It localises to the periplasm. The chain is Protein YceI from Shigella flexneri.